Reading from the N-terminus, the 386-residue chain is Probable mannan endo-1,4-beta-mannosidase A (386 aa).

The first 21 residues, 1–21 (MKLNPSLLTAAGLVSAQLASA), serve as a signal peptide directing secretion. Positions 95 and 207 each coordinate substrate. Glutamate 208 acts as the Proton donor in catalysis. Tyrosine 283 contributes to the substrate binding site. Glutamate 316 (nucleophile) is an active-site residue. N-linked (GlcNAc...) asparagine glycosylation occurs at asparagine 336. Tryptophan 346 is a binding site for substrate.

Belongs to the glycosyl hydrolase 5 (cellulase A) family.

The protein resides in the secreted. It carries out the reaction Random hydrolysis of (1-&gt;4)-beta-D-mannosidic linkages in mannans, galactomannans and glucomannans.. Its function is as follows. Endo-1,4-mannanase, a crucial enzyme for depolymerization of seed galactomannans and wood galactoglucomannans. The sequence is that of Probable mannan endo-1,4-beta-mannosidase A (manA) from Aspergillus flavus (strain ATCC 200026 / FGSC A1120 / IAM 13836 / NRRL 3357 / JCM 12722 / SRRC 167).